The sequence spans 271 residues: Proteasome inhibitor PI31 subunit (271 aa).

An N-acetylalanine modification is found at Ala2. Positions 2 to 150 are important for homodimerization and interaction with FBXO7; it reads AGLEVLFASA…PIHEQWEKAR (149 aa). Ser153 and Ser189 each carry phosphoserine. At Arg205 the chain carries Omega-N-methylarginine. Arg219 is subject to Asymmetric dimethylarginine. Residues 226–271 are disordered; it reads SGLPNRLPPGAVPPGARFDPFGPIGTSPSGPNPDHLPPPGYDDMYL. Arg231 is subject to Omega-N-methylarginine. Ser252 carries the post-translational modification Phosphoserine. Pro residues predominate over residues 255 to 265; the sequence is GPNPDHLPPPG.

Belongs to the proteasome inhibitor PI31 family. Monomer and homodimer. Interacts with FBXO7.

It is found in the cytoplasm. The protein localises to the endoplasmic reticulum. Functionally, plays an important role in control of proteasome function. Inhibits the hydrolysis of protein and peptide substrates by the 20S proteasome. Also inhibits the activation of the proteasome by the proteasome regulatory proteins PA700 and PA28. This chain is Proteasome inhibitor PI31 subunit (Psmf1), found in Mus musculus (Mouse).